Reading from the N-terminus, the 358-residue chain is 4-hydroxy-3-methylbut-2-en-1-yl diphosphate synthase (flavodoxin) (358 aa).

C270, C273, C305, and E312 together coordinate [4Fe-4S] cluster.

The protein belongs to the IspG family. Requires [4Fe-4S] cluster as cofactor.

The catalysed reaction is (2E)-4-hydroxy-3-methylbut-2-enyl diphosphate + oxidized [flavodoxin] + H2O + 2 H(+) = 2-C-methyl-D-erythritol 2,4-cyclic diphosphate + reduced [flavodoxin]. It participates in isoprenoid biosynthesis; isopentenyl diphosphate biosynthesis via DXP pathway; isopentenyl diphosphate from 1-deoxy-D-xylulose 5-phosphate: step 5/6. In terms of biological role, converts 2C-methyl-D-erythritol 2,4-cyclodiphosphate (ME-2,4cPP) into 1-hydroxy-2-methyl-2-(E)-butenyl 4-diphosphate. The protein is 4-hydroxy-3-methylbut-2-en-1-yl diphosphate synthase (flavodoxin) of Vesicomyosocius okutanii subsp. Calyptogena okutanii (strain HA).